We begin with the raw amino-acid sequence, 187 residues long: Frequenin-1 (187 aa).

Gly-2 carries the N-myristoyl glycine lipid modification. EF-hand domains follow at residues Glu-24–Gly-59, Asp-60–Gly-95, Asn-96–Met-131, and Thr-143–Ile-178. 15 residues coordinate Ca(2+): Asp-73, Asn-75, Asp-77, Ser-79, Glu-84, Asp-109, Asp-111, Asp-113, Tyr-115, Glu-120, Asp-156, Asn-158, Asp-160, Lys-162, and Glu-167.

Belongs to the recoverin family. As to quaternary structure, in contrast to Frq2, does not interact with ric8a. As to expression, enriched in synapses, such as the motor nerve endings at neuromuscular junctions. In the embryo, highly expressed in the ventral ganglia.

The protein localises to the cytoplasm. Functionally, ca(2+)-dependent modulation of synaptic efficacy. Also plays a role in axon terminal morphology. The protein is Frequenin-1 (Frq1) of Drosophila melanogaster (Fruit fly).